A 232-amino-acid polypeptide reads, in one-letter code: Adenosylcobinamide-GDP ribazoletransferase (232 aa).

7 helical membrane-spanning segments follow: residues 24-44 (LWAF…ILYL), 46-66 (IPLA…LLHL), 96-116 (IAGV…LSML), 117-137 (PFYA…LGLA), 153-173 (GMNG…YLPV), 174-194 (VIYD…WYVI), and 210-230 (GAMA…SLCF).

The protein belongs to the CobS family. It depends on Mg(2+) as a cofactor.

It is found in the cell membrane. It carries out the reaction alpha-ribazole + adenosylcob(III)inamide-GDP = adenosylcob(III)alamin + GMP + H(+). The enzyme catalyses alpha-ribazole 5'-phosphate + adenosylcob(III)inamide-GDP = adenosylcob(III)alamin 5'-phosphate + GMP + H(+). Its pathway is cofactor biosynthesis; adenosylcobalamin biosynthesis; adenosylcobalamin from cob(II)yrinate a,c-diamide: step 7/7. Its function is as follows. Joins adenosylcobinamide-GDP and alpha-ribazole to generate adenosylcobalamin (Ado-cobalamin). Also synthesizes adenosylcobalamin 5'-phosphate from adenosylcobinamide-GDP and alpha-ribazole 5'-phosphate. The sequence is that of Adenosylcobinamide-GDP ribazoletransferase from Pyrococcus abyssi (strain GE5 / Orsay).